The chain runs to 183 residues: Large ribosomal subunit protein uL13m (183 aa).

The protein belongs to the universal ribosomal protein uL13 family. Component of the mitochondrial large ribosomal subunit (mt-LSU). Mature N.crassa 74S mitochondrial ribosomes consist of a small (37S) and a large (54S) subunit. The 37S small subunit contains a 16S ribosomal RNA (16S mt-rRNA) and 32 different proteins. The 54S large subunit contains a 23S rRNA (23S mt-rRNA) and 42 different proteins.

The protein resides in the mitochondrion. Functionally, component of the mitochondrial ribosome (mitoribosome), a dedicated translation machinery responsible for the synthesis of mitochondrial genome-encoded proteins, including at least some of the essential transmembrane subunits of the mitochondrial respiratory chain. The mitoribosomes are attached to the mitochondrial inner membrane and translation products are cotranslationally integrated into the membrane. This is Large ribosomal subunit protein uL13m (mrpl23) from Neurospora crassa (strain ATCC 24698 / 74-OR23-1A / CBS 708.71 / DSM 1257 / FGSC 987).